A 175-amino-acid chain; its full sequence is D-glycero-beta-D-manno-heptose-1,7-bisphosphate 7-phosphatase (175 aa).

Catalysis depends on D7, which acts as the Nucleophile. Mg(2+) contacts are provided by D7 and D9. Substrate contacts are provided by residues 7-9, 15-19, and 50-53; these read DRD, DSDAY, and TNQS. D9 acts as the Proton donor in catalysis. C89, H91, C97, and C99 together coordinate Zn(2+). 100-101 contributes to the substrate binding site; it reads RK. D126 serves as a coordination point for Mg(2+).

The protein belongs to the gmhB family. Monomer. Requires Mg(2+) as cofactor. Zn(2+) is required as a cofactor.

Its subcellular location is the cytoplasm. It catalyses the reaction D-glycero-beta-D-manno-heptose 1,7-bisphosphate + H2O = D-glycero-beta-D-manno-heptose 1-phosphate + phosphate. It functions in the pathway nucleotide-sugar biosynthesis; ADP-L-glycero-beta-D-manno-heptose biosynthesis; ADP-L-glycero-beta-D-manno-heptose from D-glycero-beta-D-manno-heptose 7-phosphate: step 2/4. The protein operates within bacterial outer membrane biogenesis; LPS core biosynthesis. In terms of biological role, converts the D-glycero-beta-D-manno-heptose 1,7-bisphosphate (beta-HBP) intermediate into D-glycero-beta-D-manno-heptose 1-phosphate by removing the phosphate group at the C-7 position. The protein is D-glycero-beta-D-manno-heptose-1,7-bisphosphate 7-phosphatase of Pseudomonas putida (strain ATCC 47054 / DSM 6125 / CFBP 8728 / NCIMB 11950 / KT2440).